The following is a 181-amino-acid chain: MDDLTAQALKDFTARYCDAWHEEHKSWPLSEELYGVPSPCIISTTEDAVYWQPQPFTGEQNVNAVERAFDIVIQSTIHTFYTTQFAGDMHAQFGDIKLTLLQTWSEDDFRRVQENLIGHLVTQKRLKLPPTLFIATLEEELEVISVCNLSGEVCKETLGTRKRTHLASNLAEFLNQLKPLL.

It belongs to the Syd family.

The protein localises to the cell inner membrane. Interacts with the SecY protein in vivo. May bind preferentially to an uncomplexed state of SecY, thus functioning either as a chelating agent for excess SecY in the cell or as a regulatory factor that negatively controls the translocase function. The chain is Protein Syd from Shigella flexneri serotype 5b (strain 8401).